Consider the following 3357-residue polypeptide: Versican core protein (3357 aa).

Positions 1-23 are cleaved as a signal peptide; that stretch reads MLINMKGILWMCSTLLLTHALHQ. Residues 24–146 enclose the Ig-like V-type domain; sequence AKMETSPPVK…EDTQDTMSLA (123 aa). Disulfide bonds link Cys44-Cys130, Cys172-Cys243, Cys196-Cys217, Cys270-Cys333, and Cys294-Cys315. An N-linked (GlcNAc...) asparagine glycan is attached at Asn57. 2 consecutive Link domains span residues 150–245 and 251–347; these read VVFH…YCYV and DVFH…YCFK. N-linked (GlcNAc...) asparagine glycosylation is found at Asn330, Asn351, and Asn441. Positions 348–1308 are GAG-alpha (glucosaminoglycan attachment domain); sequence PKQNISEATT…IIEVRENKTG (961 aa). A compositionally biased stretch (basic and acidic residues) spans 625–634; it reads EPKTNGKVTE. The segment at 625–646 is disordered; sequence EPKTNGKVTEDEFGQSQPTTTF. Ser660 carries an O-linked (Xyl...) (chondroitin sulfate) serine glycan. Disordered regions lie at residues 801–863 and 881–908; these read WPGD…KPLE and TSTS…TTST. Asn807 carries N-linked (GlcNAc...) asparagine glycosylation. Asn914 and Asn951 each carry an N-linked (GlcNAc...) asparagine glycan. Disordered stretches follow at residues 1010–1088 and 1252–1288; these read SPGA…YPPG and DHMT…PAAG. 2 stretches are compositionally biased toward polar residues: residues 1017 to 1042 and 1275 to 1286; these read TGVS…SSTA and SKTQELSTSTPA. 2 N-linked (GlcNAc...) asparagine glycosylation sites follow: Asn1305 and Asn1371. Residues 1309 to 3051 are GAG-beta; it reads RLSDMIVSGH…VEGTAVYLPG (1743 aa). Over residues 1396–1406 the composition is skewed to basic and acidic residues; sequence DPEAAEARRGQ. Disordered stretches follow at residues 1396-1421 and 1458-1524; these read DPEA…DSSA and TYPE…AIEQ. Composition is skewed to polar residues over residues 1411–1421 and 1487–1498; these read APSQNFPDSSA and WSESITESSPNL. O-linked (Xyl...) (chondroitin sulfate) serine glycosylation is found at Ser1517 and Ser1599. The tract at residues 1664–1705 is disordered; it reads LPSPDARPTTVWNSNSTSEWVSDKSFEGRKKKENEDEEGAVN. Over residues 1673–1683 the composition is skewed to polar residues; sequence TVWNSNSTSEW. Residue Asn1678 is glycosylated (N-linked (GlcNAc...) asparagine). Over residues 1684–1697 the composition is skewed to basic and acidic residues; that stretch reads VSDKSFEGRKKKEN. Residues Ser1907 and Ser1931 are each glycosylated (O-linked (Xyl...) (chondroitin sulfate) serine). Residues 1926-1965 are disordered; the sequence is VGMGGSDDERVRDTQTSSSIPTTSDNIYPVPDSKGPDSTV. The span at 1939-1951 shows a compositional bias: polar residues; that stretch reads TQTSSSIPTTSDN. Asn2053 is a glycosylation site (N-linked (GlcNAc...) asparagine). Residues Ser2219 and Ser2226 are each glycosylated (O-linked (Xyl...) (chondroitin sulfate) serine). Asn2243 is a glycosylation site (N-linked (GlcNAc...) asparagine). The segment covering 2308-2322 has biased composition (polar residues); that stretch reads TLSHTGTEEPTTSTL. 2 disordered regions span residues 2308–2374 and 2475–2494; these read TLSH…ATSP and YPTS…EGIE. Residue Asn2361 is glycosylated (N-linked (GlcNAc...) asparagine). Low complexity predominate over residues 2475-2486; the sequence is YPTSTLPSTEPY. A phosphoserine mark is found at Ser2585 and Ser2586. The N-linked (GlcNAc...) asparagine glycan is linked to Asn2626. O-linked (Xyl...) (chondroitin sulfate) serine glycosylation is found at Ser2696, Ser2697, and Ser2741. The disordered stretch occupies residues 2853–2908; it reads LGGNVHRTEPPSMSRDPALDVSEDESKHKLLEELETSPTKPETSQDFPNKAKDHIP. The span at 2888–2899 shows a compositional bias: polar residues; sequence TSPTKPETSQDF. Asn3029 is a glycosylation site (N-linked (GlcNAc...) asparagine). In terms of domain architecture, EGF-like 1 spans 3051–3087; it reads GPDLCKTNPCLNGGTCYPTETSYVCTCAPGYSGDQCE. Disulfide bonds link Cys3055–Cys3066, Cys3060–Cys3075, Cys3077–Cys3086, Cys3093–Cys3104, Cys3098–Cys3113, Cys3115–Cys3124, Cys3131–Cys3142, Cys3159–Cys3251, Cys3227–Cys3243, Cys3258–Cys3301, and Cys3287–Cys3314. The EGF-like 2; calcium-binding domain maps to 3089-3125; sequence DFDECHSNPCRNGATCVDGFNTFRCLCLPSYVGALCE. The C-type lectin domain maps to 3138 to 3252; sequence FQGQCYKYFA…CNYHLTYTCK (115 aa). One can recognise a Sushi domain in the interval 3256-3316; sequence VACGQPPVVE…WAMPKITCMN (61 aa). Asn3331 and Asn3341 each carry an N-linked (GlcNAc...) asparagine glycan. Positions 3331–3342 are enriched in polar residues; the sequence is NSSSAKDNSINT. Residues 3331–3357 form a disordered region; sequence NSSSAKDNSINTSKHEHRWSRRQETRR.

Belongs to the aggrecan/versican proteoglycan family. In terms of assembly, interacts with FBLN1. Post-translationally, phosphorylated by FAM20C in the extracellular medium. In terms of processing, proteolytically cleaved by ADAMTS5 and ADAMTS15 in the pericellular matrix surrounding myoblasts, facilitating myoblast contact and fusion which is required for skeletal muscle development and regeneration. In terms of tissue distribution, expressed in the retina (at protein level). Isoform V2: Only expressed in brain.

It is found in the secreted. The protein resides in the extracellular space. The protein localises to the extracellular matrix. It localises to the cell projection. Its subcellular location is the cilium. It is found in the photoreceptor outer segment. The protein resides in the interphotoreceptor matrix. Its function is as follows. May play a role in intercellular signaling and in connecting cells with the extracellular matrix. May take part in the regulation of cell motility, growth and differentiation. Binds hyaluronic acid. This Mus musculus (Mouse) protein is Versican core protein (Vcan).